A 323-amino-acid chain; its full sequence is Sphingolipid delta(4)-desaturase DES1 (323 aa).

Glycine 2 carries N-myristoyl glycine lipidation. A run of 2 helical transmembrane segments spans residues 41–61 (PNLI…FYLV) and 68–88 (WLMF…TLAI). The Histidine box-1 signature appears at 89–93 (HEISH). The chain crosses the membrane as a helical span at residues 104–124 (WNRWFGMFANLSLGVPYSISF). Residues 128–132 (HMDHH) carry the Histidine box-2 motif. Transmembrane regions (helical) follow at residues 152-172 (FFCT…FYAF), 184-204 (HLEV…YYVF), and 210-230 (VYML…GHFI). The Histidine box-3 motif lies at 259–263 (HNEHH). Phosphoserine is present on serine 307.

It belongs to the fatty acid desaturase type 1 family. DEGS subfamily. As to quaternary structure, interacts with RLBP1; the interaction increases synthesis of chromophore-precursors by DEGS1. In terms of processing, myristoylation can target the enzyme to the mitochondria leading to an increase in ceramide levels.

It localises to the mitochondrion membrane. The protein localises to the endoplasmic reticulum membrane. The enzyme catalyses an N-acylsphinganine + 2 Fe(II)-[cytochrome b5] + O2 + 2 H(+) = an N-acylsphing-4-enine + 2 Fe(III)-[cytochrome b5] + 2 H2O. The catalysed reaction is all-trans-retinol = 11-cis-retinol. It catalyses the reaction all-trans-retinol = 9-cis-retinol. It carries out the reaction all-trans-retinol = 13-cis-retinol. The enzyme catalyses 11-cis-retinol = 13-cis-retinol. The catalysed reaction is 11-cis-retinol = 9-cis-retinol. In terms of biological role, has sphingolipid-delta-4-desaturase activity. Converts D-erythro-sphinganine to D-erythro-sphingosine (E-sphing-4-enine). Catalyzes the equilibrium isomerization of retinols. The polypeptide is Sphingolipid delta(4)-desaturase DES1 (Rattus norvegicus (Rat)).